A 241-amino-acid polypeptide reads, in one-letter code: Uracil-DNA glycosylase (241 aa).

Aspartate 71 acts as the Proton acceptor in catalysis.

This sequence belongs to the uracil-DNA glycosylase (UDG) superfamily. UNG family.

It localises to the cytoplasm. It carries out the reaction Hydrolyzes single-stranded DNA or mismatched double-stranded DNA and polynucleotides, releasing free uracil.. In terms of biological role, excises uracil residues from the DNA which can arise as a result of misincorporation of dUMP residues by DNA polymerase or due to deamination of cytosine. The protein is Uracil-DNA glycosylase of Xanthomonas euvesicatoria pv. vesicatoria (strain 85-10) (Xanthomonas campestris pv. vesicatoria).